Here is a 113-residue protein sequence, read N- to C-terminus: Large ribosomal subunit protein uL22 (113 aa).

It belongs to the universal ribosomal protein uL22 family. As to quaternary structure, part of the 50S ribosomal subunit.

Its function is as follows. This protein binds specifically to 23S rRNA; its binding is stimulated by other ribosomal proteins, e.g. L4, L17, and L20. It is important during the early stages of 50S assembly. It makes multiple contacts with different domains of the 23S rRNA in the assembled 50S subunit and ribosome. The globular domain of the protein is located near the polypeptide exit tunnel on the outside of the subunit, while an extended beta-hairpin is found that lines the wall of the exit tunnel in the center of the 70S ribosome. The sequence is that of Large ribosomal subunit protein uL22 from Stenotrophomonas maltophilia (strain K279a).